The sequence spans 203 residues: Molybdenum cofactor guanylyltransferase (203 aa).

Residues 20 to 22, Lys33, Asn61, Asp78, and Asp108 each bind GTP; that span reads LAG. Residue Asp108 coordinates Mg(2+).

This sequence belongs to the MobA family. As to quaternary structure, monomer. Mg(2+) serves as cofactor.

Its subcellular location is the cytoplasm. The catalysed reaction is Mo-molybdopterin + GTP + H(+) = Mo-molybdopterin guanine dinucleotide + diphosphate. Its function is as follows. Transfers a GMP moiety from GTP to Mo-molybdopterin (Mo-MPT) cofactor (Moco or molybdenum cofactor) to form Mo-molybdopterin guanine dinucleotide (Mo-MGD) cofactor. This chain is Molybdenum cofactor guanylyltransferase, found in Vibrio cholerae serotype O1 (strain ATCC 39315 / El Tor Inaba N16961).